The following is a 697-amino-acid chain: Phenylalanine--tRNA ligase beta subunit, chloroplastic (697 aa).

One can recognise a B5 domain in the interval 283 to 368 (NISRILFIDK…RIYGFDNFIS (86 aa)). Positions 346, 352, 355, and 356 each coordinate Mg(2+). In terms of domain architecture, FDX-ACB spans 609-697 (SSYPSLTRDI…IDDLLNEYKL (89 aa)).

This sequence belongs to the phenylalanyl-tRNA synthetase beta subunit family. Type 1 subfamily. Tetramer of two alpha and two beta subunits. The cofactor is Mg(2+).

The protein localises to the plastid. The protein resides in the chloroplast. The catalysed reaction is tRNA(Phe) + L-phenylalanine + ATP = L-phenylalanyl-tRNA(Phe) + AMP + diphosphate + H(+). This chain is Phenylalanine--tRNA ligase beta subunit, chloroplastic, found in Gracilaria tenuistipitata var. liui (Red alga).